A 396-amino-acid polypeptide reads, in one-letter code: Elongation factor Tu (396 aa).

The region spanning 10 to 205 (KPHVNIGTIG…AVDESIPDPV (196 aa)) is the tr-type G domain. A G1 region spans residues 19-26 (GHVDHGKT). 19-26 (GHVDHGKT) serves as a coordination point for GTP. Mg(2+) is bound at residue Thr26. The segment at 62–66 (GITIN) is G2. The interval 83 to 86 (DAPG) is G3. GTP is bound by residues 83-87 (DAPGH) and 138-141 (NKAD). The tract at residues 138–141 (NKAD) is G4. Residues 175–177 (SAL) form a G5 region.

The protein belongs to the TRAFAC class translation factor GTPase superfamily. Classic translation factor GTPase family. EF-Tu/EF-1A subfamily. Monomer.

It localises to the cytoplasm. It carries out the reaction GTP + H2O = GDP + phosphate + H(+). GTP hydrolase that promotes the GTP-dependent binding of aminoacyl-tRNA to the A-site of ribosomes during protein biosynthesis. This chain is Elongation factor Tu, found in Mycobacterium bovis (strain ATCC BAA-935 / AF2122/97).